The chain runs to 450 residues: UDP-N-acetylmuramoylalanine--D-glutamate ligase (450 aa).

112–118 provides a ligand contact to ATP; sequence GSNGKTT.

The protein belongs to the MurCDEF family.

It is found in the cytoplasm. It catalyses the reaction UDP-N-acetyl-alpha-D-muramoyl-L-alanine + D-glutamate + ATP = UDP-N-acetyl-alpha-D-muramoyl-L-alanyl-D-glutamate + ADP + phosphate + H(+). The protein operates within cell wall biogenesis; peptidoglycan biosynthesis. In terms of biological role, cell wall formation. Catalyzes the addition of glutamate to the nucleotide precursor UDP-N-acetylmuramoyl-L-alanine (UMA). This Cytophaga hutchinsonii (strain ATCC 33406 / DSM 1761 / CIP 103989 / NBRC 15051 / NCIMB 9469 / D465) protein is UDP-N-acetylmuramoylalanine--D-glutamate ligase.